We begin with the raw amino-acid sequence, 209 residues long: Uridine kinase (209 aa).

Position 12–19 (12–19 (GGSASGKT)) interacts with ATP.

The protein belongs to the uridine kinase family.

The protein resides in the cytoplasm. It catalyses the reaction uridine + ATP = UMP + ADP + H(+). The catalysed reaction is cytidine + ATP = CMP + ADP + H(+). Its pathway is pyrimidine metabolism; CTP biosynthesis via salvage pathway; CTP from cytidine: step 1/3. The protein operates within pyrimidine metabolism; UMP biosynthesis via salvage pathway; UMP from uridine: step 1/1. In Chloroflexus aggregans (strain MD-66 / DSM 9485), this protein is Uridine kinase.